Reading from the N-terminus, the 130-residue chain is Ribonuclease P protein component 2 (130 aa).

Belongs to the eukaryotic/archaeal RNase P protein component 2 family. In terms of assembly, consists of a catalytic RNA component and at least 4-5 protein subunits.

It localises to the cytoplasm. It carries out the reaction Endonucleolytic cleavage of RNA, removing 5'-extranucleotides from tRNA precursor.. Functionally, part of ribonuclease P, a protein complex that generates mature tRNA molecules by cleaving their 5'-ends. This chain is Ribonuclease P protein component 2, found in Methanococcus maripaludis (strain C6 / ATCC BAA-1332).